The sequence spans 582 residues: Regulatory solute carrier protein family 1 member 1 (582 aa).

Disordered stretches follow at residues 1-32, 56-76, 143-180, 303-325, 363-384, 390-409, 426-452, and 483-529; these read MSSL…ARSV, KASA…LQVL, EKSW…VPQD, VDMS…HGQP, VTCQ…SGRR, LTPS…SESG, ASTS…ESAR, and SEGA…LSTP. Positions 16-32 are enriched in polar residues; the sequence is SGQSPEVGSPTSLARSV. A compositionally biased stretch (polar residues) spans 148-179; the sequence is PENQTPSPVNGLQQHRETGSVQREAGQQSVPQ. The span at 390 to 408 shows a compositional bias: polar residues; sequence LTPSDQYSQGSCHQATSES. Composition is skewed to basic and acidic residues over residues 438–452 and 490–503; these read SPDR…ESAR and PSEH…DRPE. The region spanning 536–576 is the UBA domain; sequence IFPAADVDRILGAGFTLQEALGALHRVGGNADLALLVLLAK.

In terms of assembly, interacts with YRDC. In terms of tissue distribution, expressed in epithelial and subepithelial cells of small intestine.

It is found in the cell membrane. Its subcellular location is the nucleus. It localises to the golgi apparatus. The protein localises to the trans-Golgi network. In terms of biological role, mediates transcriptional and post-transcriptional regulation of SLC5A1. Inhibits a dynamin and PKC-dependent exocytotic pathway of SLC5A1. Also involved in transcriptional regulation of SLC22A2. Exhibits glucose-dependent, short-term inhibition of SLC5A1 and SLC22A2 by inhibiting the release of vesicles from the trans-Golgi network. Regulates the expression of SLC5A1 in a tissue-specific manner and is specifically involved in its regulation in the small intestine. The polypeptide is Regulatory solute carrier protein family 1 member 1 (Rsc1a1) (Mus musculus (Mouse)).